We begin with the raw amino-acid sequence, 1377 residues long: DNA-directed RNA polymerase subunit beta (1377 aa).

This sequence belongs to the RNA polymerase beta chain family. As to quaternary structure, the RNAP catalytic core consists of 2 alpha, 1 beta, 1 beta' and 1 omega subunit. When a sigma factor is associated with the core the holoenzyme is formed, which can initiate transcription.

It carries out the reaction RNA(n) + a ribonucleoside 5'-triphosphate = RNA(n+1) + diphosphate. Its function is as follows. DNA-dependent RNA polymerase catalyzes the transcription of DNA into RNA using the four ribonucleoside triphosphates as substrates. The sequence is that of DNA-directed RNA polymerase subunit beta from Orientia tsutsugamushi (strain Boryong) (Rickettsia tsutsugamushi).